Here is a 748-residue protein sequence, read N- to C-terminus: Ribonucleoprotein PTB-binding 1 (748 aa).

The segment at 1–42 (MAADVSVTHRPPLSPEAEAEAETPETVDRRTPEQELPPLDPE) is disordered. Ala2 is modified (N-acetylalanine). A phosphoserine mark is found at Ser6 and Ser14. Phosphothreonine is present on Thr31. Residues 45-60 (RKRLEHTERQFRNRRK) carry the Nuclear localization signal motif. RRM domains lie at 59–130 (RKIL…LQPT), 132–210 (ALLC…WTDA), and 221–299 (RCLC…FCAP). The interval 307-401 (LAALIAAQAT…QSQSQKKPGI (95 aa)) is interaction with PTBP1. Disordered regions lie at residues 390–505 (QSQS…GEPP), 525–647 (SNLA…PLSH), and 672–731 (KAVG…QHSQ). Phosphothreonine is present on Thr469. A phosphoserine mark is found at Ser480, Ser576, Ser626, and Ser630. The segment covering 675–685 (GSSPMGSSEGL) has biased composition (low complexity). 2 positions are modified to phosphoserine: Ser716 and Ser720. The short motif at 743–746 (KRKR) is the Nuclear localization signal element.

In terms of assembly, interacts with PTBP1, RAVER2, VCL and ACTN1. Part of a complex containing RAVER1, VCL and ACTN1. In terms of tissue distribution, ubiquitous. Detected in aorta, brain, gut, heart, kidney, liver, spleen, uterus and skeletal muscle.

Its subcellular location is the nucleus. The protein resides in the cytoplasm. In terms of biological role, cooperates with PTBP1 to modulate regulated alternative splicing events. Promotes exon skipping. Cooperates with PTBP1 to modulate switching between mutually exclusive exons during maturation of the TPM1 pre-mRNA. This is Ribonucleoprotein PTB-binding 1 (Raver1) from Rattus norvegicus (Rat).